The chain runs to 538 residues: GSY2-interacting protein PIG2 (538 aa).

Residues Ser-162, Ser-196, Ser-296, and Ser-304 each carry the phosphoserine modification. One can recognise a CBM21 domain in the interval Leu-384–Asp-508.

Its function is as follows. Interacts with glycogen synthase 2 (GSY2); possibly also interacts with phosphatase 1 (GLC7). In Saccharomyces cerevisiae (strain ATCC 204508 / S288c) (Baker's yeast), this protein is GSY2-interacting protein PIG2 (PIG2).